The following is a 136-amino-acid chain: Crossover junction endodeoxyribonuclease Hjc (136 aa).

Residue Glu-9 participates in Mg(2+) binding. The active site involves Ser-29. Mg(2+)-binding residues include Asp-38 and Glu-51.

This sequence belongs to the Holliday junction resolvase Hjc family. Homodimer. Mg(2+) is required as a cofactor.

The catalysed reaction is Endonucleolytic cleavage at a junction such as a reciprocal single-stranded crossover between two homologous DNA duplexes (Holliday junction).. Functionally, a structure-specific endonuclease that resolves Holliday junction (HJ) intermediates during genetic recombination. Cleaves 4-way DNA junctions introducing paired nicks in opposing strands, leaving a 5'-terminal phosphate and a 3'-terminal hydroxyl group that are subsequently ligated to produce recombinant products. The sequence is that of Crossover junction endodeoxyribonuclease Hjc from Archaeoglobus fulgidus (strain ATCC 49558 / DSM 4304 / JCM 9628 / NBRC 100126 / VC-16).